The primary structure comprises 1057 residues: Carbamoyl phosphate synthase large chain (1057 aa).

Positions 1–401 are carboxyphosphate synthetic domain; that stretch reads MPKNKDINTI…SLLKAIRSLE (401 aa). The ATP site is built by arginine 129, arginine 169, glycine 175, glycine 176, lysine 208, isoleucine 210, glutamate 215, glycine 241, isoleucine 242, histidine 243, glutamine 284, and glutamate 298. The 195-residue stretch at 133–327 folds into the ATP-grasp 1 domain; sequence RSLMNELDVP…IAKLAAKIAV (195 aa). Mg(2+)-binding residues include glutamine 284, glutamate 298, and asparagine 300. The Mn(2+) site is built by glutamine 284, glutamate 298, and asparagine 300. The oligomerization domain stretch occupies residues 402 to 546; sequence YGVHHLGLPN…YGTYERDNES (145 aa). The segment at 547–929 is carbamoyl phosphate synthetic domain; it reads VVTDKEKVIV…ALFKGLTASG (383 aa). An ATP-grasp 2 domain is found at 671 to 861; the sequence is EALLNKIDVP…MAQLAMRAIL (191 aa). The ATP site is built by arginine 707, arginine 746, leucine 748, glutamate 752, glycine 777, valine 778, histidine 779, serine 780, glutamine 820, and glutamate 832. Residues glutamine 820, glutamate 832, and asparagine 834 each coordinate Mg(2+). Mn(2+) is bound by residues glutamine 820, glutamate 832, and asparagine 834. The region spanning 930–1057 is the MGS-like domain; sequence VEVKDHGTVL…ESMSFTMKQM (128 aa). The segment at 930–1057 is allosteric domain; that stretch reads VEVKDHGTVL…ESMSFTMKQM (128 aa).

Belongs to the CarB family. As to quaternary structure, composed of two chains; the small (or glutamine) chain promotes the hydrolysis of glutamine to ammonia, which is used by the large (or ammonia) chain to synthesize carbamoyl phosphate. Tetramer of heterodimers (alpha,beta)4. It depends on Mg(2+) as a cofactor. The cofactor is Mn(2+).

The enzyme catalyses hydrogencarbonate + L-glutamine + 2 ATP + H2O = carbamoyl phosphate + L-glutamate + 2 ADP + phosphate + 2 H(+). It catalyses the reaction hydrogencarbonate + NH4(+) + 2 ATP = carbamoyl phosphate + 2 ADP + phosphate + 2 H(+). The protein operates within amino-acid biosynthesis; L-arginine biosynthesis; carbamoyl phosphate from bicarbonate: step 1/1. It functions in the pathway pyrimidine metabolism; UMP biosynthesis via de novo pathway; (S)-dihydroorotate from bicarbonate: step 1/3. Its function is as follows. Large subunit of the glutamine-dependent carbamoyl phosphate synthetase (CPSase). CPSase catalyzes the formation of carbamoyl phosphate from the ammonia moiety of glutamine, carbonate, and phosphate donated by ATP, constituting the first step of 2 biosynthetic pathways, one leading to arginine and/or urea and the other to pyrimidine nucleotides. The large subunit (synthetase) binds the substrates ammonia (free or transferred from glutamine from the small subunit), hydrogencarbonate and ATP and carries out an ATP-coupled ligase reaction, activating hydrogencarbonate by forming carboxy phosphate which reacts with ammonia to form carbamoyl phosphate. This Staphylococcus carnosus (strain TM300) protein is Carbamoyl phosphate synthase large chain.